The sequence spans 215 residues: Riboflavin synthase (215 aa).

Lumazine-binding repeat units follow at residues 1–96 (MFTG…FGGH) and 97–193 (IVSG…EQFL). Residues 4-6 (GII), 47-49 (CLT), 61-66 (DVMSET), 100-102 (GHI), K135, 144-146 (SLT), and 158-163 (SIIPHT) each bind 2,4-dihydroxypteridine.

As to quaternary structure, homotrimer.

It carries out the reaction 2 6,7-dimethyl-8-(1-D-ribityl)lumazine + H(+) = 5-amino-6-(D-ribitylamino)uracil + riboflavin. It participates in cofactor biosynthesis; riboflavin biosynthesis; riboflavin from 2-hydroxy-3-oxobutyl phosphate and 5-amino-6-(D-ribitylamino)uracil: step 2/2. Catalyzes the dismutation of two molecules of 6,7-dimethyl-8-ribityllumazine, resulting in the formation of riboflavin and 5-amino-6-(D-ribitylamino)uracil. This Actinobacillus pleuropneumoniae (Haemophilus pleuropneumoniae) protein is Riboflavin synthase (ribE).